We begin with the raw amino-acid sequence, 274 residues long: MAD2L1-binding protein (274 aa).

Positions 45–78 (ASEAFCPRDCMVPVVFPGPVSQEGCCQFTCELLK) are interaction with MAD2L1. Phosphoserine is present on Ser-102.

It belongs to the MAD2L1BP family. In terms of assembly, interacts with MAD2L1.

Its subcellular location is the nucleus. It is found in the cytoplasm. The protein resides in the cytoskeleton. It localises to the spindle. Its function is as follows. May function to silence the spindle checkpoint and allow mitosis to proceed through anaphase by binding MAD2L1 after it has become dissociated from the MAD2L1-CDC20 complex. This chain is MAD2L1-binding protein (MAD2L1BP), found in Homo sapiens (Human).